The chain runs to 209 residues: MERMDLSLYVITDEKLLEGKDIYSCIEQAISGGATVIQYRAKNKSSKKMYEEAVVIKKVCRKYDIPFIVNDRIDIAIAVDADGVHLGQDDLDVEVARRILGFEKIIGLSTKKIEDVIKANSLPVDYIGFGSVFPTSTKEDAVYAGLEKLKEVMKISVQPVVAIGGINEKNLTDLLKTGCRNVAVVSAVFKDDNIKENTERLKNIMENFT.

4-amino-2-methyl-5-(diphosphooxymethyl)pyrimidine-binding positions include glutamine 38–lysine 42 and asparagine 70. 2 residues coordinate Mg(2+): aspartate 71 and aspartate 90. Residue serine 109 participates in 4-amino-2-methyl-5-(diphosphooxymethyl)pyrimidine binding. Residue threonine 135–threonine 137 coordinates 2-[(2R,5Z)-2-carboxy-4-methylthiazol-5(2H)-ylidene]ethyl phosphate. Residue lysine 138 coordinates 4-amino-2-methyl-5-(diphosphooxymethyl)pyrimidine. 2-[(2R,5Z)-2-carboxy-4-methylthiazol-5(2H)-ylidene]ethyl phosphate contacts are provided by residues glycine 165 and valine 185–serine 186.

This sequence belongs to the thiamine-phosphate synthase family. It depends on Mg(2+) as a cofactor.

It catalyses the reaction 2-[(2R,5Z)-2-carboxy-4-methylthiazol-5(2H)-ylidene]ethyl phosphate + 4-amino-2-methyl-5-(diphosphooxymethyl)pyrimidine + 2 H(+) = thiamine phosphate + CO2 + diphosphate. The catalysed reaction is 2-(2-carboxy-4-methylthiazol-5-yl)ethyl phosphate + 4-amino-2-methyl-5-(diphosphooxymethyl)pyrimidine + 2 H(+) = thiamine phosphate + CO2 + diphosphate. It carries out the reaction 4-methyl-5-(2-phosphooxyethyl)-thiazole + 4-amino-2-methyl-5-(diphosphooxymethyl)pyrimidine + H(+) = thiamine phosphate + diphosphate. It functions in the pathway cofactor biosynthesis; thiamine diphosphate biosynthesis; thiamine phosphate from 4-amino-2-methyl-5-diphosphomethylpyrimidine and 4-methyl-5-(2-phosphoethyl)-thiazole: step 1/1. Its function is as follows. Condenses 4-methyl-5-(beta-hydroxyethyl)thiazole monophosphate (THZ-P) and 2-methyl-4-amino-5-hydroxymethyl pyrimidine pyrophosphate (HMP-PP) to form thiamine monophosphate (TMP). The polypeptide is Thiamine-phosphate synthase (Persephonella marina (strain DSM 14350 / EX-H1)).